Here is a 208-residue protein sequence, read N- to C-terminus: Uracil phosphoribosyltransferase (208 aa).

Residues Arg78, Arg103, and 130 to 138 (DPMLATGGS) each bind 5-phospho-alpha-D-ribose 1-diphosphate. Residues Ile193 and 198 to 200 (GDA) contribute to the uracil site. Asp199 contributes to the 5-phospho-alpha-D-ribose 1-diphosphate binding site.

This sequence belongs to the UPRTase family. Requires Mg(2+) as cofactor.

The enzyme catalyses UMP + diphosphate = 5-phospho-alpha-D-ribose 1-diphosphate + uracil. The protein operates within pyrimidine metabolism; UMP biosynthesis via salvage pathway; UMP from uracil: step 1/1. Its activity is regulated as follows. Allosterically activated by GTP. Its function is as follows. Catalyzes the conversion of uracil and 5-phospho-alpha-D-ribose 1-diphosphate (PRPP) to UMP and diphosphate. This Neisseria gonorrhoeae (strain ATCC 700825 / FA 1090) protein is Uracil phosphoribosyltransferase.